A 479-amino-acid chain; its full sequence is Leucine-rich repeat-containing protein 74A (479 aa).

Residues 1 to 10 (MDDDDIEPLE) are compositionally biased toward acidic residues. Positions 1–29 (MDDDDIEPLEYETKDETEAALAPQSSEDT) are disordered. LRR repeat units lie at residues 119–140 (TVLK…SLME), 147–167 (YLQE…RIIS), 176–197 (SLWK…LLCQ), 204–225 (RIRS…YLGQ), 232–253 (GLQS…ALCN), 260–281 (TLKK…ALGD), 288–309 (CLVY…RISK), and 316–336 (CLQV…YSLI).

This chain is Leucine-rich repeat-containing protein 74A, found in Rattus norvegicus (Rat).